The sequence spans 378 residues: SPbeta prophage-derived uncharacterized protein YorJ (378 aa).

The polypeptide is SPbeta prophage-derived uncharacterized protein YorJ (yorJ) (Bacillus subtilis (strain 168)).